We begin with the raw amino-acid sequence, 341 residues long: Formimidoylglutamase (341 aa).

Residues histidine 133, aspartate 162, histidine 164, aspartate 166, cysteine 253, and aspartate 255 each coordinate Mn(2+).

This sequence belongs to the arginase family. The cofactor is Mn(2+).

The enzyme catalyses N-formimidoyl-L-glutamate + H2O = formamide + L-glutamate. The protein operates within amino-acid degradation; L-histidine degradation into L-glutamate; L-glutamate from N-formimidoyl-L-glutamate (hydrolase route): step 1/1. In terms of biological role, catalyzes the conversion of N-formimidoyl-L-glutamate to L-glutamate and formamide. The polypeptide is Formimidoylglutamase (Aromatoleum aromaticum (strain DSM 19018 / LMG 30748 / EbN1) (Azoarcus sp. (strain EbN1))).